Consider the following 280-residue polypeptide: 2-dehydro-3-deoxyphosphooctonate aldolase (280 aa).

This sequence belongs to the KdsA family.

The protein resides in the cytoplasm. The catalysed reaction is D-arabinose 5-phosphate + phosphoenolpyruvate + H2O = 3-deoxy-alpha-D-manno-2-octulosonate-8-phosphate + phosphate. It functions in the pathway carbohydrate biosynthesis; 3-deoxy-D-manno-octulosonate biosynthesis; 3-deoxy-D-manno-octulosonate from D-ribulose 5-phosphate: step 2/3. It participates in bacterial outer membrane biogenesis; lipopolysaccharide biosynthesis. The sequence is that of 2-dehydro-3-deoxyphosphooctonate aldolase from Coxiella burnetii (strain CbuK_Q154) (Coxiella burnetii (strain Q154)).